The primary structure comprises 241 residues: Adenosine 5'-phosphosulfate reductase (241 aa).

Cysteine 122, cysteine 123, cysteine 205, and cysteine 208 together coordinate [4Fe-4S] cluster. The Nucleophile; cysteine thiosulfonate intermediate role is filled by cysteine 231.

The protein belongs to the PAPS reductase family. CysH subfamily. Requires [4Fe-4S] cluster as cofactor.

It localises to the cytoplasm. It carries out the reaction [thioredoxin]-disulfide + sulfite + AMP + 2 H(+) = adenosine 5'-phosphosulfate + [thioredoxin]-dithiol. It participates in sulfur metabolism; hydrogen sulfide biosynthesis; sulfite from sulfate. Catalyzes the formation of sulfite from adenosine 5'-phosphosulfate (APS) using thioredoxin as an electron donor. This Shouchella clausii (strain KSM-K16) (Alkalihalobacillus clausii) protein is Adenosine 5'-phosphosulfate reductase.